The following is a 542-amino-acid chain: Doublesex- and mab-3-related transcription factor A2 (542 aa).

A DNA-binding region (DM) is located at residues 70-117 (CARCRNHGVVSALKGHKRYCRWKDCLCAKCTLIAERQRVMAAQVALRR). The disordered stretch occupies residues 201 to 316 (LQAGRPGSPL…GGSGPRQRTP (116 aa)). In terms of domain architecture, DMA spans 314-349 (RTPLDILTRVFPGHRRGVLELVLQGCGGDVVQAIEQ).

The protein belongs to the DMRT family. As to expression, expressed in testis.

It is found in the nucleus. In terms of biological role, may be involved in sexual development. This Homo sapiens (Human) protein is Doublesex- and mab-3-related transcription factor A2 (DMRTA2).